We begin with the raw amino-acid sequence, 221 residues long: uncharacterized protein (221 aa).

The first 26 residues, 1 to 26 (MVRLVPRAFAATVALLAAGFSPATAS), serve as a signal peptide directing secretion.

This is an uncharacterized protein from Mycobacterium tuberculosis (strain CDC 1551 / Oshkosh).